An 895-amino-acid polypeptide reads, in one-letter code: DNA mismatch repair protein MutS (895 aa).

632–639 (GPNMAGKS) lines the ATP pocket. The segment at 824–849 (VTQDKKQVKKQTKNNHSARSGSRQQQ) is disordered. The segment covering 837–849 (NNHSARSGSRQQQ) has biased composition (polar residues).

The protein belongs to the DNA mismatch repair MutS family.

Its function is as follows. This protein is involved in the repair of mismatches in DNA. It is possible that it carries out the mismatch recognition step. This protein has a weak ATPase activity. This chain is DNA mismatch repair protein MutS, found in Desulforapulum autotrophicum (strain ATCC 43914 / DSM 3382 / VKM B-1955 / HRM2) (Desulfobacterium autotrophicum).